The following is a 93-amino-acid chain: Antitoxin RelF (93 aa).

The protein belongs to the phD/YefM antitoxin family. Interacts with toxin RelG, which neutralizes the toxin. Also interacts with toxins RelE and RelK in vitro, in M.smegmatis coexpression with non-cognate toxins increases the toxicity of RelE but not of RelK.

In terms of biological role, antitoxin component of a type II toxin-antitoxin (TA) system. Upon expression in M.smegmatis neutralizes the effect of toxin RelE2. Its function is as follows. Induces its own promoter, in combination with RelG represses its own promoter. Has been seen to bind DNA in complex with toxin RelG but not alone. This chain is Antitoxin RelF (relF), found in Mycobacterium tuberculosis (strain ATCC 25618 / H37Rv).